A 506-amino-acid chain; its full sequence is GTPase Der (506 aa).

2 EngA-type G domains span residues 3–166 and 218–391; these read PVVA…GEQL and IKIA…ACAT. GTP is bound by residues 9 to 16, 56 to 60, 118 to 121, 224 to 231, 271 to 275, and 336 to 339; these read GRPNVGKS, DTGGI, NKTD, DTAGV, and NKWD. The 85-residue stretch at 392–476 folds into the KH-like domain; that stretch reads QKTSTSMLTR…PIRIQFQEGN (85 aa).

This sequence belongs to the TRAFAC class TrmE-Era-EngA-EngB-Septin-like GTPase superfamily. EngA (Der) GTPase family. Associates with the 50S ribosomal subunit.

Its function is as follows. GTPase that plays an essential role in the late steps of ribosome biogenesis. The sequence is that of GTPase Der from Actinobacillus pleuropneumoniae serotype 5b (strain L20).